Reading from the N-terminus, the 610-residue chain is MARISFSCLFPASWHCSLPSVTQFSRQRVALLIISVAVFILVFAAVADLQLWSSRAFRDRQFRRYLDQIEDLEATDTKDTKLNYGVVVDCGSSGSRVFVYFWPPHNGNPHDLLDIKQMRDRGSKPVVKKIKPGISTMALTPEKSSDYINPLLSFAASYIPKHKHKETPLYILCTAGMRILPESQQIAILQDLVKDVPQEFDFLFSEAHAEVISGKQEGVYAWISINFVLGRFDHVVDEEDAVVAVTIGTQEESIIRKRTVGVIDMGGGSLQIAYEVPTTMTYPSVEHEEVAKSMLAEFNLGCDLQHTEHVYRVYVTTFMGFGGNFARQRYEDMVFNDTITKNRIQGQQIGVHPNSPLQDPCLPVGLIDQVRRQSHDLHVLGKGNWDSCRQQLEPLLLKSNDTQAYLNSVYQPSIDFSNSEFYGFSEFFYCTEDVLRMGGIYNSQKFAKAAKEYCSMPWTTLQDRFNSGLYSSHADQHRLKYQCFKSAWMFSILHNGFHFPHEYPNFKTAQLVYDKEVQWTLGAILYKTRFLPLRDIRQESSRPAHVSWFRISFVYNHYLFFACILVVLLSIVLYILRLRRIHRRQARASALDLLLMEEGVHTVLEPGIPT.

Over 1–28 the chain is Cytoplasmic; that stretch reads MARISFSCLFPASWHCSLPSVTQFSRQR. The helical transmembrane segment at 29–49 threads the bilayer; that stretch reads VALLIISVAVFILVFAAVADL. Topologically, residues 50 to 555 are vesicular; it reads QLWSSRAFRD…VSWFRISFVY (506 aa). The Proton acceptor role is filled by glutamate 217. Asparagine 336 and asparagine 400 each carry an N-linked (GlcNAc...) asparagine glycan. An intrachain disulfide couples cysteine 454 to cysteine 483. The helical transmembrane segment at 556–576 threads the bilayer; sequence NHYLFFACILVVLLSIVLYIL. Residues 577–610 are Cytoplasmic-facing; that stretch reads RLRRIHRRQARASALDLLLMEEGVHTVLEPGIPT.

Belongs to the GDA1/CD39 NTPase family. The cofactor is Ca(2+). It depends on Mg(2+) as a cofactor.

The protein resides in the cytoplasmic vesicle membrane. The catalysed reaction is a ribonucleoside 5'-triphosphate + H2O = a ribonucleoside 5'-diphosphate + phosphate + H(+). It catalyses the reaction UTP + H2O = UDP + phosphate + H(+). The enzyme catalyses GTP + H2O = GDP + phosphate + H(+). It carries out the reaction CTP + H2O = CDP + phosphate + H(+). Catalyzes the hydrolysis of nucleoside triphosphates and diphosphates in a calcium- or magnesium-dependent manner. Preferentially hydrolyzes nucleoside 5'-triphosphates, with substrate preference for UTP &gt; GTP &gt; CTP. Hydrolyzes ATP and nucleoside diphosphates only to a minor extent. In Xenopus tropicalis (Western clawed frog), this protein is Ectonucleoside triphosphate diphosphohydrolase 7 (entpd7).